We begin with the raw amino-acid sequence, 184 residues long: Cytidylate kinase (184 aa).

An ATP-binding site is contributed by 8 to 16 (GQPGSGKTT).

This sequence belongs to the cytidylate kinase family. Type 2 subfamily.

It localises to the cytoplasm. It carries out the reaction CMP + ATP = CDP + ADP. It catalyses the reaction dCMP + ATP = dCDP + ADP. This is Cytidylate kinase from Pyrobaculum neutrophilum (strain DSM 2338 / JCM 9278 / NBRC 100436 / V24Sta) (Thermoproteus neutrophilus).